The following is a 340-amino-acid chain: Protein RecA (340 aa).

Residue 66-73 (GPESSGKT) participates in ATP binding.

Belongs to the RecA family.

It localises to the cytoplasm. In terms of biological role, can catalyze the hydrolysis of ATP in the presence of single-stranded DNA, the ATP-dependent uptake of single-stranded DNA by duplex DNA, and the ATP-dependent hybridization of homologous single-stranded DNAs. It interacts with LexA causing its activation and leading to its autocatalytic cleavage. This is Protein RecA from Rickettsia prowazekii (strain Madrid E).